Consider the following 366-residue polypeptide: Chorismate synthase (366 aa).

Positions 48 and 54 each coordinate NADP(+). FMN contacts are provided by residues 125–127 (RSS), 238–239 (NA), G278, 293–297 (KPTSS), and R319.

It belongs to the chorismate synthase family. In terms of assembly, homotetramer. Requires FMNH2 as cofactor.

The catalysed reaction is 5-O-(1-carboxyvinyl)-3-phosphoshikimate = chorismate + phosphate. It functions in the pathway metabolic intermediate biosynthesis; chorismate biosynthesis; chorismate from D-erythrose 4-phosphate and phosphoenolpyruvate: step 7/7. Functionally, catalyzes the anti-1,4-elimination of the C-3 phosphate and the C-6 proR hydrogen from 5-enolpyruvylshikimate-3-phosphate (EPSP) to yield chorismate, which is the branch point compound that serves as the starting substrate for the three terminal pathways of aromatic amino acid biosynthesis. This reaction introduces a second double bond into the aromatic ring system. This Paraburkholderia phytofirmans (strain DSM 17436 / LMG 22146 / PsJN) (Burkholderia phytofirmans) protein is Chorismate synthase.